Here is a 732-residue protein sequence, read N- to C-terminus: Ionotropic receptor 40a (732 aa).

The first 19 residues, 1–19 (MHKFLALGLLPYLLGLLNS), serve as a signal peptide directing secretion. Residues Asn18, Asn235, and Asn299 are each glycosylated (N-linked (GlcNAc...) asparagine). Residues 20–369 (TRLTFIGNDE…RPFKQDIWPH (350 aa)) are Extracellular-facing. Residues 370–390 (LILTIIFSGPIFYGIIALPYI) form a helical membrane-spanning segment. At 391–465 (WRRRWANSDV…NELHNGYRAK (75 aa)) the chain is on the cytoplasmic side. A helical membrane pass occupies residues 466–486 (FLTIVYWIAATYVLADVYSAQ). The Extracellular segment spans residues 487–688 (LTSQFARPAR…LNLRMLQGAF (202 aa)). A glycan (N-linked (GlcNAc...) asparagine) is linked at Asn531. The helical transmembrane segment at 689-709 (IALGVGSLAAGVILLLEIVFI) threads the bilayer. Residues 710–732 (KLDQARLWMLCSRLQWIRYDRKV) lie on the Cytoplasmic side of the membrane.

This sequence belongs to the glutamate-gated ion channel (TC 1.A.10.1) family. As to expression, in the antenna, detected in sacculus neurons which innervate the first and second chambers (at protein level).

The protein resides in the cell membrane. Functionally, integral part of a neural sensory system in the antenna that provides the neural basis for the response to environmental changes in humidity (hygrosensation). Together with Ir25a and Ir93a, mediates the response of the hygrosensory sacculus neurons to changes in relative humidity and is required for dry detection behavior. This chain is Ionotropic receptor 40a, found in Drosophila melanogaster (Fruit fly).